The sequence spans 348 residues: Holliday junction branch migration complex subunit RuvB (348 aa).

The tract at residues 1-181 (MEERMITPQQ…FGVISRLEFY (181 aa)) is large ATPase domain (RuvB-L). Residues L20, R21, G62, K65, T66, T67, R171, Y181, and R218 each coordinate ATP. T66 lines the Mg(2+) pocket. The interval 182–252 (EVEDLIRIIT…LAGKSLDRLE (71 aa)) is small ATPAse domain (RuvB-S). The interval 255 to 348 (PAGLDRIDQK…GDSLFDAAED (94 aa)) is head domain (RuvB-H). The DNA site is built by R310 and R315. The tract at residues 329 to 348 (VNSSHQEGGQGDSLFDAAED) is disordered.

This sequence belongs to the RuvB family. Homohexamer. Forms an RuvA(8)-RuvB(12)-Holliday junction (HJ) complex. HJ DNA is sandwiched between 2 RuvA tetramers; dsDNA enters through RuvA and exits via RuvB. An RuvB hexamer assembles on each DNA strand where it exits the tetramer. Each RuvB hexamer is contacted by two RuvA subunits (via domain III) on 2 adjacent RuvB subunits; this complex drives branch migration. In the full resolvosome a probable DNA-RuvA(4)-RuvB(12)-RuvC(2) complex forms which resolves the HJ.

It localises to the cytoplasm. It carries out the reaction ATP + H2O = ADP + phosphate + H(+). Functionally, the RuvA-RuvB-RuvC complex processes Holliday junction (HJ) DNA during genetic recombination and DNA repair, while the RuvA-RuvB complex plays an important role in the rescue of blocked DNA replication forks via replication fork reversal (RFR). RuvA specifically binds to HJ cruciform DNA, conferring on it an open structure. The RuvB hexamer acts as an ATP-dependent pump, pulling dsDNA into and through the RuvAB complex. RuvB forms 2 homohexamers on either side of HJ DNA bound by 1 or 2 RuvA tetramers; 4 subunits per hexamer contact DNA at a time. Coordinated motions by a converter formed by DNA-disengaged RuvB subunits stimulates ATP hydrolysis and nucleotide exchange. Immobilization of the converter enables RuvB to convert the ATP-contained energy into a lever motion, pulling 2 nucleotides of DNA out of the RuvA tetramer per ATP hydrolyzed, thus driving DNA branch migration. The RuvB motors rotate together with the DNA substrate, which together with the progressing nucleotide cycle form the mechanistic basis for DNA recombination by continuous HJ branch migration. Branch migration allows RuvC to scan DNA until it finds its consensus sequence, where it cleaves and resolves cruciform DNA. This is Holliday junction branch migration complex subunit RuvB from Desulfitobacterium hafniense (strain DSM 10664 / DCB-2).